A 359-amino-acid chain; its full sequence is MLSREEILEILSEYDLEDLSIATLGSHTALHILKGAKEEGLRSVVVCEEGRTTPYERLGVADEIIVVERFQDMLDEEVQERLRELNAIVVPHGSFVAYVGLDGIENEFCVPMFGNRRLLRWESERSLERKLLKRAGVKVPKVFDSPEDIDRPVIVKFPGARGGRGYFICSDPEEFEEKAERLIEDGVIDEEDLEQAHIEEYVVGTNFCVHYFRSVVEDTVEVLGMDRRYETNIDGLVRMPAGDQLEAGLEPSYVISGNIPVVVRESLLVQLYEMGDRVVRASEDIEEPGFIGPFCLQTLCTEDLEFYVFELSARIDGGTNVTFLPYAYLKFGEIVTMGRRIAKEVREARDKGLLEGVVT.

The 5-amino-1-(5-phospho-beta-D-ribosyl)imidazole-4-carboxamide site is built by His27 and Ser94. In terms of domain architecture, ATP-grasp spans 116–340 (RRLLRWESER…FGEIVTMGRR (225 aa)). ATP-binding positions include 146-208 (PEDI…TNFC) and Glu230. Asn258 is a binding site for 5-amino-1-(5-phospho-beta-D-ribosyl)imidazole-4-carboxamide. Residues Gln297 and Glu310 each contribute to the Mg(2+) site.

Belongs to the phosphohexose mutase family. The cofactor is Mg(2+). It depends on Mn(2+) as a cofactor.

It catalyses the reaction 5-amino-1-(5-phospho-beta-D-ribosyl)imidazole-4-carboxamide + formate + ATP = 5-formamido-1-(5-phospho-D-ribosyl)imidazole-4-carboxamide + ADP + phosphate. It participates in purine metabolism; IMP biosynthesis via de novo pathway; 5-formamido-1-(5-phospho-D-ribosyl)imidazole-4-carboxamide from 5-amino-1-(5-phospho-D-ribosyl)imidazole-4-carboxamide (formate route): step 1/1. Catalyzes the ATP- and formate-dependent formylation of 5-aminoimidazole-4-carboxamide-1-beta-d-ribofuranosyl 5'-monophosphate (AICAR) to 5-formaminoimidazole-4-carboxamide-1-beta-d-ribofuranosyl 5'-monophosphate (FAICAR) in the absence of folates. This is 5-formaminoimidazole-4-carboxamide-1-(beta)-D-ribofuranosyl 5'-monophosphate synthetase from Methanopyrus kandleri (strain AV19 / DSM 6324 / JCM 9639 / NBRC 100938).